The following is a 318-amino-acid chain: Acetyl-coenzyme A carboxylase carboxyl transferase subunit alpha (318 aa).

A CoA carboxyltransferase C-terminal domain is found at 43–293 (RSQTALRDLY…GDGIAAALKS (251 aa)).

It belongs to the AccA family. In terms of assembly, acetyl-CoA carboxylase is a heterohexamer composed of biotin carboxyl carrier protein (AccB), biotin carboxylase (AccC) and two subunits each of ACCase subunit alpha (AccA) and ACCase subunit beta (AccD).

The protein localises to the cytoplasm. The enzyme catalyses N(6)-carboxybiotinyl-L-lysyl-[protein] + acetyl-CoA = N(6)-biotinyl-L-lysyl-[protein] + malonyl-CoA. Its pathway is lipid metabolism; malonyl-CoA biosynthesis; malonyl-CoA from acetyl-CoA: step 1/1. Its function is as follows. Component of the acetyl coenzyme A carboxylase (ACC) complex. First, biotin carboxylase catalyzes the carboxylation of biotin on its carrier protein (BCCP) and then the CO(2) group is transferred by the carboxyltransferase to acetyl-CoA to form malonyl-CoA. The sequence is that of Acetyl-coenzyme A carboxylase carboxyl transferase subunit alpha from Bartonella bacilliformis (strain ATCC 35685 / KC583 / Herrer 020/F12,63).